We begin with the raw amino-acid sequence, 1220 residues long: Deubiquitinating protein VCPIP1 (1220 aa).

Residues 1 to 19 show a composition bias toward pro residues; the sequence is MSQPPPPPPLPPPPPPPEA. Residues 1–40 form a disordered region; sequence MSQPPPPPPLPPPPPPPEAPQTSSSLAAAASPGGLSKRRD. Residues 20-35 show a composition bias toward low complexity; that stretch reads PQTSSSLAAAASPGGL. The OTU domain occupies 207-360; sequence LIPVHVDGDG…RNHYIPLVGI (154 aa). The active site involves D215. The Nucleophile role is filled by C218. H353 is a catalytic residue. K407 bears the N6-acetyllysine mark. Disordered regions lie at residues 724–778 and 988–1008; these read SVMQ…KIRI and EATT…LGSG. Phosphoserine is present on residues S746 and S756. Positions 754 to 770 are enriched in low complexity; the sequence is PSSAPATPTKAPYSPTT. The residue at position 762 (T762) is a Phosphothreonine. 4 positions are modified to phosphoserine: S767, S993, S997, and S1076. Disordered regions lie at residues 1113 to 1140 and 1185 to 1220; these read SSIQ…QRKV and FATR…MDHS. Residues S1196 and S1205 each carry the phosphoserine modification. Residues 1197–1207 show a composition bias toward acidic residues; it reads MEEPEEMDSQD. Over residues 1208–1220 the composition is skewed to polar residues; sequence AETTNTTEPMDHS.

As to quaternary structure, binds VCP and the ternary complex containing STX5A, NSFL1C and VCP. Post-translationally, phosphorylated at Ser-1205 by ATM or ATR following induction of covalent DNA-protein cross-links (DPCs).

Its subcellular location is the nucleus. It localises to the cytoplasm. The protein resides in the endoplasmic reticulum. The protein localises to the golgi apparatus. It is found in the golgi stack. It catalyses the reaction Thiol-dependent hydrolysis of ester, thioester, amide, peptide and isopeptide bonds formed by the C-terminal Gly of ubiquitin (a 76-residue protein attached to proteins as an intracellular targeting signal).. Deubiquitinating enzyme involved in DNA repair and reassembly of the Golgi apparatus and the endoplasmic reticulum following mitosis. Necessary for VCP-mediated reassembly of Golgi stacks after mitosis. Plays a role in VCP-mediated formation of transitional endoplasmic reticulum (tER). Mediates dissociation of the ternary complex containing STX5A, NSFL1C and VCP. Also involved in DNA repair following phosphorylation by ATM or ATR: acts by catalyzing deubiquitination of SPRTN, thereby promoting SPRTN recruitment to chromatin and subsequent proteolytic cleavage of covalent DNA-protein cross-links (DPCs). Hydrolyzes 'Lys-11'- and 'Lys-48'-linked polyubiquitin chains. The sequence is that of Deubiquitinating protein VCPIP1 from Mus musculus (Mouse).